The sequence spans 152 residues: Transcriptional regulator MraZ (152 aa).

2 SpoVT-AbrB domains span residues 5-52 (ANAV…PLPE) and 81-124 (AVDL…NEDA).

The protein belongs to the MraZ family. In terms of assembly, forms oligomers.

It localises to the cytoplasm. It is found in the nucleoid. The protein is Transcriptional regulator MraZ of Azotobacter vinelandii (strain DJ / ATCC BAA-1303).